A 384-amino-acid chain; its full sequence is Bacterial ceramide synthase (384 aa).

Its subcellular location is the cytoplasm. It carries out the reaction 3-oxosphinganine + a fatty acyl-CoA = N-acyl-3-oxosphinganine + CoA + H(+). The enzyme catalyses 3-oxosphinganine + tetradecanoyl-CoA = N-tetradecanoyl-3-oxosphinganine + CoA + H(+). The catalysed reaction is 3-oxosphinganine + hexadecanoyl-CoA = N-hexadecanoyl-3-oxosphinganine + CoA + H(+). It catalyses the reaction 3-oxosphinganine + (9Z)-hexadecenoyl-CoA = N-(9Z-hexadecenoyl)-3-oxosphinganine + CoA + H(+). It carries out the reaction 3-oxosphinganine + octanoyl-CoA = N-octanoyl-3-oxosphinganine + CoA + H(+). The enzyme catalyses 3-oxosphinganine + decanoyl-CoA = N-decanoyl-3-oxosphinganine + CoA + H(+). The catalysed reaction is 3-oxosphinganine + dodecanoyl-CoA = N-dodecanoyl-3-oxosphinganine + CoA + H(+). It catalyses the reaction 3-oxosphinganine + octadecanoyl-CoA = N-octadecanoyl-3-oxosphinganine + CoA + H(+). It carries out the reaction 3-oxosphinganine + eicosanoyl-CoA = N-eicosanoyl-3-oxosphinganine + CoA + H(+). The enzyme catalyses 3-oxosphinganine + docosanoyl-CoA = N-docosanoyl-3-ketodihydrosphingosine + CoA + H(+). The catalysed reaction is 3-oxosphinganine + tetracosanoyl-CoA = N-tetracosanoyl-3-oxosphinganine + CoA + H(+). The protein operates within lipid metabolism; sphingolipid metabolism. Functionally, involved in de novo bacterial ceramide synthesis. Catalyzes the condensation of 3-oxosphinganine with an acyl-CoA to generate oxidized ceramides. Can use acyl-CoA substrates ranging from C8 to C24, with highest in vitro activity with C14 and very little activity with acyl-CoA thioesters of 18 carbons or longer. May have a preference for monounsaturated acyl-CoA substrates, as it has a threefold greater preference for C16:1-CoA over C16:0-CoA as a substrate in vitro. The protein is Bacterial ceramide synthase of Caulobacter vibrioides (strain NA1000 / CB15N) (Caulobacter crescentus).